Here is a 138-residue protein sequence, read N- to C-terminus: Ribulose bisphosphate carboxylase small subunit (138 aa).

Belongs to the RuBisCO small chain family. As to quaternary structure, heterohexadecamer of 8 large and 8 small subunits.

The protein resides in the plastid. It localises to the chloroplast. Functionally, ruBisCO catalyzes two reactions: the carboxylation of D-ribulose 1,5-bisphosphate, the primary event in carbon dioxide fixation, as well as the oxidative fragmentation of the pentose substrate in the photorespiration process. Both reactions occur simultaneously and in competition at the same active site. Although the small subunit is not catalytic it is essential for maximal activity. The sequence is that of Ribulose bisphosphate carboxylase small subunit from Porphyra purpurea (Red seaweed).